The sequence spans 196 residues: GTP cyclohydrolase-2 (196 aa).

Position 49–53 (49–53 (RVHSE)) interacts with GTP. Zn(2+) contacts are provided by cysteine 54, cysteine 65, and cysteine 67. Residues glutamine 70, 92 to 94 (EGR), and threonine 114 contribute to the GTP site. Aspartate 126 (proton acceptor) is an active-site residue. The active-site Nucleophile is arginine 128. GTP is bound by residues threonine 149 and lysine 154.

This sequence belongs to the GTP cyclohydrolase II family. Homodimer. The cofactor is Zn(2+).

It catalyses the reaction GTP + 4 H2O = 2,5-diamino-6-hydroxy-4-(5-phosphoribosylamino)-pyrimidine + formate + 2 phosphate + 3 H(+). Its pathway is cofactor biosynthesis; riboflavin biosynthesis; 5-amino-6-(D-ribitylamino)uracil from GTP: step 1/4. Catalyzes the conversion of GTP to 2,5-diamino-6-ribosylamino-4(3H)-pyrimidinone 5'-phosphate (DARP), formate and pyrophosphate. The protein is GTP cyclohydrolase-2 of Escherichia coli O45:K1 (strain S88 / ExPEC).